The following is a 112-amino-acid chain: Thioredoxin-like protein YdfQ (112 aa).

The region spanning 1-107 is the Thioredoxin domain; the sequence is MKEMTGLHSL…LEQKLKRVYR (107 aa). C32 and C35 are oxidised to a cystine.

The protein is Thioredoxin-like protein YdfQ (ydfQ) of Bacillus subtilis (strain 168).